We begin with the raw amino-acid sequence, 285 residues long: Polyamine aminopropyltransferase (285 aa).

Positions 5-241 (DNWYIEHFQP…GWWSVTMASK (237 aa)) constitute a PABS domain. Gln-35 lines the S-methyl-5'-thioadenosine pocket. Residues His-66 and Asp-90 each coordinate spermidine. S-methyl-5'-thioadenosine is bound by residues Asp-110 and 141–142 (DG). Asp-160 (proton acceptor) is an active-site residue. 160-163 (DSTD) provides a ligand contact to spermidine. Pro-167 provides a ligand contact to S-methyl-5'-thioadenosine.

This sequence belongs to the spermidine/spermine synthase family. As to quaternary structure, homodimer or homotetramer.

The protein resides in the cytoplasm. The catalysed reaction is S-adenosyl 3-(methylsulfanyl)propylamine + putrescine = S-methyl-5'-thioadenosine + spermidine + H(+). It participates in amine and polyamine biosynthesis; spermidine biosynthesis; spermidine from putrescine: step 1/1. Functionally, catalyzes the irreversible transfer of a propylamine group from the amino donor S-adenosylmethioninamine (decarboxy-AdoMet) to putrescine (1,4-diaminobutane) to yield spermidine. This is Polyamine aminopropyltransferase from Xanthomonas euvesicatoria pv. vesicatoria (strain 85-10) (Xanthomonas campestris pv. vesicatoria).